Reading from the N-terminus, the 361-residue chain is Myb/SANT-like DNA-binding domain-containing protein 7 (361 aa).

The Myb-like domain occupies 11–70 (RWSRQETRTLLSILGEAEYIQRLQTVHHNADVYQAVSKRMQQEGFRRTERQCRSKFKVLK). Disordered regions lie at residues 174–198 (TSDL…SYSS) and 217–272 (RLGV…ARRR). Composition is skewed to polar residues over residues 187 to 198 (AGCSQGTPSYSS) and 226 to 249 (PCTS…SSSR).

This chain is Myb/SANT-like DNA-binding domain-containing protein 7, found in Homo sapiens (Human).